A 155-amino-acid polypeptide reads, in one-letter code: SsrA-binding protein (155 aa).

The protein belongs to the SmpB family.

It localises to the cytoplasm. Functionally, required for rescue of stalled ribosomes mediated by trans-translation. Binds to transfer-messenger RNA (tmRNA), required for stable association of tmRNA with ribosomes. tmRNA and SmpB together mimic tRNA shape, replacing the anticodon stem-loop with SmpB. tmRNA is encoded by the ssrA gene; the 2 termini fold to resemble tRNA(Ala) and it encodes a 'tag peptide', a short internal open reading frame. During trans-translation Ala-aminoacylated tmRNA acts like a tRNA, entering the A-site of stalled ribosomes, displacing the stalled mRNA. The ribosome then switches to translate the ORF on the tmRNA; the nascent peptide is terminated with the 'tag peptide' encoded by the tmRNA and targeted for degradation. The ribosome is freed to recommence translation, which seems to be the essential function of trans-translation. The polypeptide is SsrA-binding protein (Clostridium acetobutylicum (strain ATCC 824 / DSM 792 / JCM 1419 / IAM 19013 / LMG 5710 / NBRC 13948 / NRRL B-527 / VKM B-1787 / 2291 / W)).